We begin with the raw amino-acid sequence, 198 residues long: Nucleoid occlusion factor SlmA (198 aa).

The HTH tetR-type domain occupies 9–70 (RNRREEILQA…SLIEFIEDSL (62 aa)). A DNA-binding region (H-T-H motif) is located at residues 33–52 (TTAKLAANVGVSEAALYRHF). The stretch at 113-144 (ALMFEQDRLQDRINQLFERIESQLRQVLREHK) forms a coiled coil.

This sequence belongs to the nucleoid occlusion factor SlmA family. As to quaternary structure, homodimer. Interacts with FtsZ.

The protein localises to the cytoplasm. It localises to the nucleoid. In terms of biological role, required for nucleoid occlusion (NO) phenomenon, which prevents Z-ring formation and cell division over the nucleoid. Acts as a DNA-associated cell division inhibitor that binds simultaneously chromosomal DNA and FtsZ, and disrupts the assembly of FtsZ polymers. SlmA-DNA-binding sequences (SBS) are dispersed on non-Ter regions of the chromosome, preventing FtsZ polymerization at these regions. This Pectobacterium carotovorum subsp. carotovorum (strain PC1) protein is Nucleoid occlusion factor SlmA.